Consider the following 162-residue polypeptide: MELLAPNLRVVFCGINPGLSSAHQGYPFANGSNRFWKVVHQAGFTDTQLAPEQWQQLQDTGCGITALVARPTVAASEVTRDELLSGGEALKEKILRYQPRALAILGKQAFSSAFGVKNAAWGRQEMTIGKTEVWVLPNPSGLNRATLEQLTESYRELFLALK.

The protein belongs to the uracil-DNA glycosylase (UDG) superfamily. TDG/mug family. As to quaternary structure, binds DNA as a monomer.

The protein resides in the cytoplasm. The enzyme catalyses Specifically hydrolyzes mismatched double-stranded DNA and polynucleotides, releasing free uracil.. Functionally, excises ethenocytosine and uracil, which can arise by alkylation or deamination of cytosine, respectively, from the corresponding mispairs with guanine in ds-DNA. It is capable of hydrolyzing the carbon-nitrogen bond between the sugar-phosphate backbone of the DNA and the mispaired base. The complementary strand guanine functions in substrate recognition. Required for DNA damage lesion repair in stationary-phase cells. The sequence is that of G/U mismatch-specific DNA glycosylase from Serratia proteamaculans (strain 568).